The following is a 507-amino-acid chain: Maturase K (507 aa).

It belongs to the intron maturase 2 family. MatK subfamily.

It localises to the plastid. Its subcellular location is the chloroplast. Its function is as follows. Usually encoded in the trnK tRNA gene intron. Probably assists in splicing its own and other chloroplast group II introns. The chain is Maturase K from Lyonia lucida (Fetterbush).